The sequence spans 692 residues: DNA ligase (692 aa).

Residues 40-44 (DAAYD), 89-90 (SL), and glutamate 121 each bind NAD(+). Lysine 123 functions as the N6-AMP-lysine intermediate in the catalytic mechanism. Residues arginine 144, glutamate 181, lysine 297, and lysine 321 each coordinate NAD(+). Residues cysteine 415, cysteine 417, cysteine 439, and cysteine 445 each coordinate Zn(2+). A BRCT domain is found at 614–692 (KTDTAVAGKT…EDEWLEMVGS (79 aa)).

Belongs to the NAD-dependent DNA ligase family. LigA subfamily. It depends on Mg(2+) as a cofactor. Requires Mn(2+) as cofactor.

The catalysed reaction is NAD(+) + (deoxyribonucleotide)n-3'-hydroxyl + 5'-phospho-(deoxyribonucleotide)m = (deoxyribonucleotide)n+m + AMP + beta-nicotinamide D-nucleotide.. Functionally, DNA ligase that catalyzes the formation of phosphodiester linkages between 5'-phosphoryl and 3'-hydroxyl groups in double-stranded DNA using NAD as a coenzyme and as the energy source for the reaction. It is essential for DNA replication and repair of damaged DNA. This chain is DNA ligase, found in Phenylobacterium zucineum (strain HLK1).